The following is a 362-amino-acid chain: Aminomethyltransferase (362 aa).

The protein belongs to the GcvT family. As to quaternary structure, the glycine cleavage system is composed of four proteins: P, T, L and H.

The catalysed reaction is N(6)-[(R)-S(8)-aminomethyldihydrolipoyl]-L-lysyl-[protein] + (6S)-5,6,7,8-tetrahydrofolate = N(6)-[(R)-dihydrolipoyl]-L-lysyl-[protein] + (6R)-5,10-methylene-5,6,7,8-tetrahydrofolate + NH4(+). Its function is as follows. The glycine cleavage system catalyzes the degradation of glycine. This chain is Aminomethyltransferase, found in Pseudothermotoga lettingae (strain ATCC BAA-301 / DSM 14385 / NBRC 107922 / TMO) (Thermotoga lettingae).